The following is a 385-amino-acid chain: Putative non-inhibitory serpin-Z11 (385 aa).

The tract at residues 324–348 (GTTAVEAMYSPSSPGYSPGYQPPRP) is RCL.

The protein belongs to the serpin family.

The polypeptide is Putative non-inhibitory serpin-Z11 (Oryza sativa subsp. japonica (Rice)).